Reading from the N-terminus, the 32-residue chain is Photosystem II reaction center protein Psb30 (32 aa).

Residues 3–23 (IVIVQLGSLALITLAGPIIIV) form a helical membrane-spanning segment.

This sequence belongs to the Psb30/Ycf12 family. PSII is composed of 1 copy each of membrane proteins PsbA, PsbB, PsbC, PsbD, PsbE, PsbF, PsbH, PsbI, PsbJ, PsbK, PsbL, PsbM, PsbT, PsbY, PsbZ, Psb30/Ycf12, peripheral proteins of the oxygen-evolving complex and a large number of cofactors. It forms dimeric complexes.

It is found in the plastid. It localises to the chloroplast thylakoid membrane. Functionally, a core subunit of photosystem II (PSII), probably helps stabilize the reaction center. This is Photosystem II reaction center protein Psb30 from Euglena viridis (Cercaria viridis).